A 398-amino-acid chain; its full sequence is Na(+)/H(+) antiporter NhaA (398 aa).

Helical transmembrane passes span 19–39 (IGGILLMLATALALIMANSPG), 64–84 (LLLWINDGLMAGFFFLVGLEL), 99–119 (IILPAIGALGGMVVPSCIYLA), 130–150 (GWAIPAATDIAFALGILSLLG), 159–179 (ILLTTLAIFDDIGAILIIACF), 182–202 (NDIYLPGLLIALLCMLILFIV), 222–242 (IAMLKSGVHATLAGVILAMFI), 266–286 (ATFIILPIFAFANSGINLTNI), 299–319 (IALGLFIGKPLGIISFLWVGV), 337–357 (GMSALAGIGFTMSLFVGSLAF), and 370–390 (LGIIMGSLFSGLLGYLLLNKT).

It belongs to the NhaA Na(+)/H(+) (TC 2.A.33) antiporter family.

It is found in the cell inner membrane. The enzyme catalyses Na(+)(in) + 2 H(+)(out) = Na(+)(out) + 2 H(+)(in). In terms of biological role, na(+)/H(+) antiporter that extrudes sodium in exchange for external protons. The sequence is that of Na(+)/H(+) antiporter NhaA from Desulfotalea psychrophila (strain LSv54 / DSM 12343).